Reading from the N-terminus, the 131-residue chain is Peptide methionine sulfoxide reductase MsrB (131 aa).

Residues 8–130 (LEEWKQMLDP…NSVCLDLVPR (123 aa)) enclose the MsrB domain. Residues Cys47, Cys50, Cys96, and Cys99 each coordinate Zn(2+). The active-site Nucleophile is the Cys119.

Belongs to the MsrB Met sulfoxide reductase family. Zn(2+) serves as cofactor.

It catalyses the reaction L-methionyl-[protein] + [thioredoxin]-disulfide + H2O = L-methionyl-(R)-S-oxide-[protein] + [thioredoxin]-dithiol. The polypeptide is Peptide methionine sulfoxide reductase MsrB (Pseudomonas syringae pv. syringae (strain B728a)).